Reading from the N-terminus, the 482-residue chain is tRNA(Ile)-lysidine synthase (482 aa).

28 to 33 contacts ATP; that stretch reads SGGPDS.

It belongs to the tRNA(Ile)-lysidine synthase family.

The protein resides in the cytoplasm. It carries out the reaction cytidine(34) in tRNA(Ile2) + L-lysine + ATP = lysidine(34) in tRNA(Ile2) + AMP + diphosphate + H(+). Functionally, ligates lysine onto the cytidine present at position 34 of the AUA codon-specific tRNA(Ile) that contains the anticodon CAU, in an ATP-dependent manner. Cytidine is converted to lysidine, thus changing the amino acid specificity of the tRNA from methionine to isoleucine. This is tRNA(Ile)-lysidine synthase from Symbiobacterium thermophilum (strain DSM 24528 / JCM 14929 / IAM 14863 / T).